A 631-amino-acid chain; its full sequence is Sperm-associated antigen 16 protein (631 aa).

The stretch at aspartate 152–arginine 267 forms a coiled coil. A disordered region spans residues glutamine 266–lysine 332. Basic and acidic residues-rich tracts occupy residues lysine 277 to alanine 287 and glycine 295 to lysine 304. WD repeat units follow at residues leucine 350–threonine 389, glycine 392–threonine 431, glycine 434–threonine 473, glycine 476–serine 515, glycine 518–serine 557, isoleucine 560–methionine 600, and glycine 601–tryptophan 630.

In terms of assembly, interacts with SPAG6 and STK36. Phosphorylated by TSSK2. Isoform 1 is detected in testis. Isoform 4 is detected in testis and brain, and at lower levels in kidney, heart, pancreas, thyroid, ovary, adrenal gland, spinal cord, trachea and liver.

It is found in the cytoplasm. The protein localises to the cytoskeleton. Its subcellular location is the flagellum axoneme. It localises to the cilium axoneme. The protein resides in the cell projection. It is found in the cilium. The protein localises to the flagellum. Necessary for sperm flagellar function. Plays a role in motile ciliogenesis. May help to recruit STK36 to the cilium or apical surface of the cell to initiate subsequent steps of construction of the central pair apparatus of motile cilia. This is Sperm-associated antigen 16 protein (SPAG16) from Homo sapiens (Human).